The primary structure comprises 264 residues: Ribonuclease HII (264 aa).

In terms of domain architecture, RNase H type-2 spans 33-224; it reads GPVAGVDEVG…VRRVASGSNT (192 aa). A divalent metal cation is bound by residues aspartate 39, glutamate 40, and aspartate 133. Positions 222 to 264 are disordered; the sequence is SNTAEVADGQPDPRDGTAQTGEGRWSKSSHPATMRATGRAQGT.

Belongs to the RNase HII family. It depends on Mn(2+) as a cofactor. Requires Mg(2+) as cofactor.

It is found in the cytoplasm. The enzyme catalyses Endonucleolytic cleavage to 5'-phosphomonoester.. Its function is as follows. Endonuclease that specifically degrades the RNA of RNA-DNA hybrids. This chain is Ribonuclease HII, found in Mycobacterium bovis (strain ATCC BAA-935 / AF2122/97).